A 240-amino-acid polypeptide reads, in one-letter code: Coatomer subunit delta (240 aa).

Positions 215–226 (AAAKASSAPKAK) are enriched in low complexity. The segment at 215 to 240 (AAAKASSAPKAKGMQLGKKKNTSLLY) is disordered. A compositionally biased stretch (basic residues) spans 231 to 240 (GKKKNTSLLY).

It belongs to the adaptor complexes medium subunit family. Delta-COP subfamily. In terms of assembly, oligomeric complex that consists of at least the alpha, beta, beta', gamma, delta, epsilon and zeta subunits.

It localises to the cytoplasm. The protein resides in the nucleus. The coatomer is a cytosolic protein complex that binds to dilysine motifs and reversibly associates with Golgi non-clathrin-coated vesicles, which further mediate biosynthetic protein transport from the ER, via the Golgi up to the trans Golgi network. Coatomer complex is required for budding from Golgi membranes, and is essential for the retrograde Golgi-to-ER transport of dilysine-tagged proteins. The sequence is that of Coatomer subunit delta (ret2) from Schizosaccharomyces pombe (strain 972 / ATCC 24843) (Fission yeast).